The primary structure comprises 334 residues: Glucosyltransferase 3 (334 aa).

UDP-binding positions include T16, R179, and 249–254 (SHKSAT).

It belongs to the Gtf3 glucosyltransferase family. In terms of assembly, homotetramer; a dimer of dimers.

It functions in the pathway protein modification; protein glycosylation. Functionally, required for polymorphic O-glycosylation of the serine-rich repeat protein in this bacteria. Catalyzes the second step in glycosylation by transferring glucose from UDP-glucose to the terminal GlcNAc moiety of the 3-O-(N-acetyl-alpha-D-glucosaminyl)-L-seryl-[protein] resulting from the first glycosylation step. Its function is as follows. Part of the accessory SecA2/SecY2 system specifically required to export GspB, a serine-rich repeat cell wall protein encoded upstream in the same operon. This Streptococcus gordonii protein is Glucosyltransferase 3.